The primary structure comprises 760 residues: Phosphatidylinositol N-acetylglucosaminyltransferase subunit Q (760 aa).

A run of 5 helical transmembrane segments spans residues Thr-278–Gly-298, Leu-349–Trp-371, Cys-378–Tyr-400, Leu-446–Leu-468, and Leu-475–Tyr-497. The tract at residues Leu-696–Gly-748 is disordered.

Belongs to the PIGQ family. Component of the glycosylphosphatidylinositol-N-acetylglucosaminyltransferase (GPI-GnT) complex composed at least by PIGA, PIGC, PIGH, PIGP, PIGQ, PIGY and DPM2. Interacts with PIGA, PIGH and PIGC.

The protein resides in the membrane. It functions in the pathway glycolipid biosynthesis; glycosylphosphatidylinositol-anchor biosynthesis. In terms of biological role, part of the glycosylphosphatidylinositol-N-acetylglucosaminyltransferase (GPI-GnT) complex that catalyzes the transfer of N-acetylglucosamine from UDP-N-acetylglucosamine to phosphatidylinositol and participates in the first step of GPI biosynthesis. This is Phosphatidylinositol N-acetylglucosaminyltransferase subunit Q from Homo sapiens (Human).